The primary structure comprises 264 residues: Octanoyltransferase (264 aa).

A BPL/LPL catalytic domain is found at 74–262 (GTASELVWLV…AFESVFGPRQ (189 aa)). Substrate-binding positions include 113–120 (RGGEYTYH), 193–195 (AIG), and 206–208 (GIA). The Acyl-thioester intermediate role is filled by Cys-224.

The protein belongs to the LipB family.

The protein localises to the cytoplasm. It carries out the reaction octanoyl-[ACP] + L-lysyl-[protein] = N(6)-octanoyl-L-lysyl-[protein] + holo-[ACP] + H(+). Its pathway is protein modification; protein lipoylation via endogenous pathway; protein N(6)-(lipoyl)lysine from octanoyl-[acyl-carrier-protein]: step 1/2. In terms of biological role, catalyzes the transfer of endogenously produced octanoic acid from octanoyl-acyl-carrier-protein onto the lipoyl domains of lipoate-dependent enzymes. Lipoyl-ACP can also act as a substrate although octanoyl-ACP is likely to be the physiological substrate. In Brucella melitensis biotype 1 (strain ATCC 23456 / CCUG 17765 / NCTC 10094 / 16M), this protein is Octanoyltransferase.